The sequence spans 446 residues: Hercynine oxygenase (446 aa).

H51 contacts Fe cation. 87-90 (RASR) is a binding site for gamma-L-glutamyl-L-cysteine. Residues H134 and H138 each coordinate Fe cation. Gamma-L-glutamyl-L-cysteine-binding residues include D416 and R420.

This sequence belongs to the EgtB family. As to quaternary structure, monomer. It depends on Fe(2+) as a cofactor.

It carries out the reaction gamma-L-glutamyl-L-cysteine + hercynine + O2 = gamma-L-glutamyl-hercynylcysteine S-oxide + H2O. It functions in the pathway amino-acid biosynthesis; ergothioneine biosynthesis. Catalyzes the oxidative sulfurization of hercynine (N-alpha,N-alpha,N-alpha-trimethyl-L-histidine) into hercynyl-gamma-L-glutamyl-L-cysteine sulfoxide, a step in the biosynthesis pathway of ergothioneine. The sequence is that of Hercynine oxygenase from Mycolicibacterium thermoresistibile (strain ATCC 19527 / DSM 44167 / CIP 105390 / JCM 6362 / NCTC 10409 / 316) (Mycobacterium thermoresistibile).